The primary structure comprises 289 residues: F-box protein PP2-B15 (289 aa).

Positions 1–43 (MMLPEACVATILSFTTPADTISSAAVSSVFRVAGDSDFVWEKF) constitute an F-box domain.

In Arabidopsis thaliana (Mouse-ear cress), this protein is F-box protein PP2-B15 (PP2B15).